Consider the following 341-residue polypeptide: RNA 3'-terminal phosphate cyclase (341 aa).

ATP is bound by residues glutamine 102 and 283–287 (HLADQ). Histidine 308 (tele-AMP-histidine intermediate) is an active-site residue.

The protein belongs to the RNA 3'-terminal cyclase family. Type 1 subfamily.

The protein resides in the cytoplasm. It catalyses the reaction a 3'-end 3'-phospho-ribonucleotide-RNA + ATP = a 3'-end 2',3'-cyclophospho-ribonucleotide-RNA + AMP + diphosphate. Functionally, catalyzes the conversion of 3'-phosphate to a 2',3'-cyclic phosphodiester at the end of RNA. The mechanism of action of the enzyme occurs in 3 steps: (A) adenylation of the enzyme by ATP; (B) transfer of adenylate to an RNA-N3'P to produce RNA-N3'PP5'A; (C) and attack of the adjacent 2'-hydroxyl on the 3'-phosphorus in the diester linkage to produce the cyclic end product. The biological role of this enzyme is unknown but it is likely to function in some aspects of cellular RNA processing. This chain is RNA 3'-terminal phosphate cyclase, found in Ectopseudomonas mendocina (strain ymp) (Pseudomonas mendocina).